The following is a 205-amino-acid chain: Holliday junction branch migration complex subunit RuvA (205 aa).

The interval 1-64 (MIGKLKGVVD…EDMIRLYGFR (64 aa)) is domain I. A domain II region spans residues 65–143 (SDAEREWFRL…AFAPVDPALV (79 aa)). A flexible linker region spans residues 144-152 (ALAGAVEEG). Residues 153-205 (AAPQPVADAVSALVNLGYPQVQAAAAIAAALKGAGEGAEAKVLIRLGLRELAR) are domain III.

It belongs to the RuvA family. In terms of assembly, homotetramer. Forms an RuvA(8)-RuvB(12)-Holliday junction (HJ) complex. HJ DNA is sandwiched between 2 RuvA tetramers; dsDNA enters through RuvA and exits via RuvB. An RuvB hexamer assembles on each DNA strand where it exits the tetramer. Each RuvB hexamer is contacted by two RuvA subunits (via domain III) on 2 adjacent RuvB subunits; this complex drives branch migration. In the full resolvosome a probable DNA-RuvA(4)-RuvB(12)-RuvC(2) complex forms which resolves the HJ.

The protein resides in the cytoplasm. The RuvA-RuvB-RuvC complex processes Holliday junction (HJ) DNA during genetic recombination and DNA repair, while the RuvA-RuvB complex plays an important role in the rescue of blocked DNA replication forks via replication fork reversal (RFR). RuvA specifically binds to HJ cruciform DNA, conferring on it an open structure. The RuvB hexamer acts as an ATP-dependent pump, pulling dsDNA into and through the RuvAB complex. HJ branch migration allows RuvC to scan DNA until it finds its consensus sequence, where it cleaves and resolves the cruciform DNA. The polypeptide is Holliday junction branch migration complex subunit RuvA (Methylobacterium radiotolerans (strain ATCC 27329 / DSM 1819 / JCM 2831 / NBRC 15690 / NCIMB 10815 / 0-1)).